A 247-amino-acid chain; its full sequence is Osmotin-like protein NP24-I (247 aa).

A signal peptide spans 1 to 21 (MGYLTSSFVLFFLLCVTYTYA). Cystine bridges form between Cys-30-Cys-225, Cys-72-Cys-82, Cys-87-Cys-93, Cys-141-Cys-213, Cys-146-Cys-196, Cys-154-Cys-164, Cys-168-Cys-177, and Cys-178-Cys-183.

Belongs to the thaumatin family. Highest levels of both isoforms found in the outer pericarp, with smaller amounts in the inner pericarp.

Its subcellular location is the cytoplasm. The protein resides in the vacuole. It catalyses the reaction Endohydrolysis of (1-&gt;3)- or (1-&gt;4)-linkages in beta-D-glucans when the glucose residue whose reducing group is involved in the linkage to be hydrolyzed is itself substituted at C-3.. Functionally, has antifungal activity against P.betae and F.dahliae. May be involved in disease resistance in tomatoes and/or have a possible role in fruit development and ripening. Binds to beta-glucans and exhibits beta-1,3-D-glucanase activity. The chain is Osmotin-like protein NP24-I from Solanum lycopersicum (Tomato).